The sequence spans 1039 residues: Pleckstrin homology domain-containing family G member 5 (1039 aa).

Disordered stretches follow at residues 58–105 (NVST…RRHT) and 185–277 (PGDE…SSES). Composition is skewed to basic and acidic residues over residues 185 to 199 (PGDE…KDSK) and 217 to 228 (ERVDPQSRRESS). Over residues 259–277 (SSCSLPVGSSVGSSGSSES) the composition is skewed to low complexity. A DH domain is found at 372–564 (HQQEAVWELL…ERFIHHVNTC (193 aa)). A PH domain is found at 620–720 (QLLLEGSLRM…WVDTLYNAQN (101 aa)). 2 disordered regions span residues 739–785 (QHLQ…ASDG) and 800–836 (TLSS…LLPL). Over residues 744-757 (LEEEEDEQEEEGEE) the composition is skewed to acidic residues. Polar residues-rich tracts occupy residues 758 to 776 (SGTS…SNSL) and 811 to 831 (FSSQ…TPTS). At Thr760 the chain carries Phosphothreonine. Ser765 carries the phosphoserine modification. The residue at position 876 (Thr876) is a Phosphothreonine. A phosphoserine mark is found at Ser878, Ser903, and Ser908. The segment at 967 to 989 (PLSESENRPSHKAGGPADSARRK) is disordered.

As to quaternary structure, interacts with GIPC1/synectin and RHOA. Selectively expressed in cortical and hippocampal neurons with prominent expression in the cell bodies and dendrites. Weakly expressed in rat fad pad ECs (RFPECs).

It is found in the cytoplasm. Its subcellular location is the perinuclear region. The protein resides in the cell membrane. It localises to the cell junction. The protein localises to the cell projection. It is found in the lamellipodium. Its function is as follows. Functions as a guanine exchange factor (GEF) for RAB26 and thus regulates autophagy of synaptic vesicles in axon terminal of motoneurons. Involved in the control of neuronal cell differentiation. Plays a role in angiogenesis through regulation of endothelial cells chemotaxis. Also affects the migration, adhesion, and matrix/bone degradation in macrophages and osteoclasts. This is Pleckstrin homology domain-containing family G member 5 (Plekhg5) from Rattus norvegicus (Rat).